We begin with the raw amino-acid sequence, 196 residues long: SPRY domain-containing protein 7 (196 aa).

An N-acetylalanine modification is found at Ala-2. The B30.2/SPRY domain maps to 2–184 (ATSVLCCLRC…FSEFYHTPPP (183 aa)).

The polypeptide is SPRY domain-containing protein 7 (SPRYD7) (Homo sapiens (Human)).